Reading from the N-terminus, the 216-residue chain is Eukaryotic translation initiation factor isoform 4E-2 (216 aa).

The segment at 1-23 (MAEVEAPATAVEAPAAAVATTTP) is disordered. A disulfide bridge links cysteine 113 with cysteine 152.

The protein belongs to the eukaryotic initiation factor 4E family. As to quaternary structure, EIF4F is a multi-subunit complex, the composition of which varies with external and internal environmental conditions. It is composed of at least EIF4A, EIF4E and EIF4G. EIF4E is also known to interact with other partners. In higher plants two isoforms of EIF4F have been identified, named isoform EIF4F and isoform EIF(iso)4F. Isoform EIF4F has subunits p220 and p26, whereas isoform EIF(iso)4F has subunits p82 and p28. According to the redox status, the Cys-113-Cys-152 disulfide bridge may have a role in regulating protein function by affecting its ability to bind capped mRNA.

In terms of biological role, recognizes and binds the 7-methylguanosine-containing mRNA cap during an early step in the initiation of protein synthesis and facilitates ribosome binding by inducing the unwinding of the mRNAs secondary structures. This chain is Eukaryotic translation initiation factor isoform 4E-2, found in Zea mays (Maize).